Here is a 548-residue protein sequence, read N- to C-terminus: Alpha-1,3-mannosyl-glycoprotein 4-beta-N-acetylglucosaminyltransferase B (548 aa).

The Cytoplasmic portion of the chain corresponds to 1 to 7 (MRLRNGT). The chain crosses the membrane as a helical; Signal-anchor for type II membrane protein span at residues 8-28 (FLTLLLFCLCAFLSLSWYAAL). Residues 29-548 (SGQKGDVVDI…LSEIFLKKAD (520 aa)) are Lumenal-facing. Residues 36-83 (VDIYQREFLALRDRLHAAEQESLKRSKELNLVLEEIKRAVSERQALRD) adopt a coiled-coil conformation. 2 N-linked (GlcNAc...) asparagine glycosylation sites follow: Asn-87 and Asn-103.

Belongs to the glycosyltransferase 54 family. In terms of assembly, interacts with SLC35A3. The cofactor is a divalent metal cation. In terms of processing, N-glycosylated.

The protein resides in the golgi apparatus membrane. The catalysed reaction is N(4)-{beta-D-GlcNAc-(1-&gt;2)-alpha-D-Man-(1-&gt;3)-[beta-D-GlcNAc-(1-&gt;2)-alpha-D-Man-(1-&gt;6)]-beta-D-Man-(1-&gt;4)-beta-D-GlcNAc-(1-&gt;4)-beta-D-GlcNAc}-L-asparaginyl-[protein] + UDP-N-acetyl-alpha-D-glucosamine = N(4)-{beta-D-GlcNAc-(1-&gt;2)-[beta-D-GlcNAc-(1-&gt;4)]-alpha-D-Man-(1-&gt;3)-[beta-D-GlcNAc-(1-&gt;2)-alpha-D-Man-(1-&gt;6)]-beta-D-Man-(1-&gt;4)-beta-D-GlcNAc-(1-&gt;4)-beta-D-GlcNAc}-L-asparaginyl-[protein] + UDP + H(+). It catalyses the reaction an N(4)-{beta-D-GlcNAc-(1-&gt;2)-alpha-D-Man-(1-&gt;3)-[alpha-D-Man-(1-&gt;6)]-beta-D-Man-(1-&gt;4)-beta-D-GlcNAc-(1-&gt;4)-beta-D-GlcNAc}-L-asparaginyl-[protein] + UDP-N-acetyl-alpha-D-glucosamine = an N(4)-{beta-D-GlcNAc-(1-&gt;2)-[beta-D-GlcNAc-(1-&gt;4)]-alpha-D-Man-(1-&gt;3)-[alpha-D-Man-(1-&gt;6)]-beta-D-Man-(1-&gt;4)-beta-D-GlcNAc-(1-&gt;4)-beta-D-GlcNAc}-L-asparaginyl-[protein] + UDP + H(+). It carries out the reaction an N(4)-{beta-D-GlcNAc-(1-&gt;2)-alpha-D-Man-(1-&gt;3)-[beta-D-GlcNAc-(1-&gt;2)-[beta-D-GlcNAc-(1-&gt;6)]-alpha-D-Man-(1-&gt;6)]-beta-D-Man-(1-&gt;4)-beta-D-GlcNAc-(1-&gt;4)-beta-D-GlcNAc}-L-asparaginyl-[protein] + UDP-N-acetyl-alpha-D-glucosamine = an N(4)-{beta-D-GlcNAc-(1-&gt;2)-[beta-D-GlcNAc-(1-&gt;4)]-alpha-D-Man-(1-&gt;3)-[beta-D-GlcNAc-(1-&gt;2)-[beta-D-GlcNAc-(1-&gt;6)]-alpha-D-Man-(1-&gt;6)]-beta-D-Man-(1-&gt;4)-beta-D-GlcNAc-(1-&gt;4)-beta-D-GlcNAc}-L-asparaginyl-[protein] + UDP + H(+). The enzyme catalyses an N(4)-{beta-D-GlcNAc-(1-&gt;2)-alpha-D-Man-(1-&gt;3)-[beta-D-GlcNAc-(1-&gt;2)-alpha-D-Man-(1-&gt;6)]-beta-D-Man-(1-&gt;4)-beta-D-GlcNAc-(1-&gt;4)-[alpha-L-Fuc-(1-&gt;6)]-beta-D-GlcNAc}-L-asparaginyl-[protein] + UDP-N-acetyl-alpha-D-glucosamine = N(4)-{beta-D-GlcNAc-(1-&gt;2)-[beta-D-GlcNAc-(1-&gt;4)]-alpha-D-Man-(1-&gt;3)-[beta-D-GlcNAc-(1-&gt;2)-alpha-D-Man-(1-&gt;6)]-beta-D-Man-(1-&gt;4)-beta-D-GlcNAc-(1-&gt;4)-[alpha-L-Fuc-(1-&gt;6)]-beta-D-GlcNAc}-asparaginyl-[protein] + UDP + H(+). The catalysed reaction is an N(4)-{beta-D-GlcNAc-(1-&gt;2)-alpha-D-Man-(1-&gt;3)-[beta-D-Gal-(1-&gt;4)-beta-D-GlcNAc-(1-&gt;2)-alpha-D-Man-(1-&gt;6)]-beta-D-Man-(1-&gt;4)-beta-D-GlcNAc-(1-&gt;4)-beta-D-GlcNAc}-L-asparaginyl-[protein] + UDP-N-acetyl-alpha-D-glucosamine = an N(4)-{beta-D-GlcNAc-(1-&gt;2)-[beta-D-GlcNAc-(1-&gt;4)]-alpha-D-Man-(1-&gt;3)-[beta-D-Gal-(1-&gt;4)-beta-D-GlcNAc-(1-&gt;2)-alpha-D-Man-(1-&gt;6)]-beta-D-Man-(1-&gt;4)-beta-D-GlcNAc-(1-&gt;4)-beta-D-GlcNAc}-L-asparaginyl-[protein] + UDP + H(+). It catalyses the reaction N(4)-{beta-D-GlcNAc-(1-&gt;2)-alpha-D-Man-(1-&gt;3)-[alpha-D-Man-(1-&gt;3)-{alpha-D-Man-(1-&gt;6)}-alpha-D-Man-(1-&gt;6)]-beta-D-Man-(1-&gt;4)-beta-D-GlcNAc-(1-&gt;4)-beta-D-GlcNAc}-asparaginyl-[protein] + UDP-N-acetyl-alpha-D-glucosamine = N(4)-{beta-D-GlcNAc-(1-&gt;2)-[beta-D-GlcNAc-(1-&gt;4)]-alpha-D-Man-(1-&gt;3)-[alpha-D-Man-(1-&gt;3)-{alpha-D-Man-(1-&gt;6)}-alpha-D-Man-(1-&gt;6)]-beta-D-Man-(1-&gt;4)-beta-D-GlcNAc-(1-&gt;4)-beta-D-GlcNAc}-asparaginyl-[protein] + UDP + H(+). It carries out the reaction N(4)-{beta-D-GlcNAc-(1-&gt;2)-alpha-D-Man-(1-&gt;3)-beta-D-Man-(1-&gt;4)-beta-D-GlcNAc-(1-&gt;4)-beta-D-GlcNAc}-asparaginyl-[protein] + UDP-N-acetyl-alpha-D-glucosamine = N(4)-{beta-D-GlcNAc-(1-&gt;2)-[beta-D-GlcNAc-(1-&gt;4)]-alpha-D-Man-(1-&gt;3)-beta-D-Man-(1-&gt;4)-beta-D-GlcNAc-(1-&gt;4)-beta-D-GlcNAc}-asparaginyl-[protein] + UDP + H(+). It participates in protein modification; protein glycosylation. Its function is as follows. Glycosyltransferase that catalyzes the transfer of GlcNAc from UDP-GlcNAc to the GlcNAcbeta1-2Manalpha1-3 arm of the core structure of N-linked glycans through a beta1-4 linkage and participates in the production of tri- and tetra-antennary N-linked sugar chains. Prefers complex-type N-glycans over hybrid-types. Has lower affinities for donors or acceptors than MGAT4A, suggesting that, under physiological conditions, it is not the main contributor in N-glycan biosynthesis. The sequence is that of Alpha-1,3-mannosyl-glycoprotein 4-beta-N-acetylglucosaminyltransferase B from Mus musculus (Mouse).